A 399-amino-acid chain; its full sequence is Tryptophan synthase beta chain (399 aa).

Lysine 86 carries the post-translational modification N6-(pyridoxal phosphate)lysine.

Belongs to the TrpB family. As to quaternary structure, tetramer of two alpha and two beta chains. Pyridoxal 5'-phosphate is required as a cofactor.

It carries out the reaction (1S,2R)-1-C-(indol-3-yl)glycerol 3-phosphate + L-serine = D-glyceraldehyde 3-phosphate + L-tryptophan + H2O. It participates in amino-acid biosynthesis; L-tryptophan biosynthesis; L-tryptophan from chorismate: step 5/5. Functionally, the beta subunit is responsible for the synthesis of L-tryptophan from indole and L-serine. The protein is Tryptophan synthase beta chain (trpB) of Buchnera aphidicola subsp. Schizaphis graminum (strain Sg).